The sequence spans 103 residues: Co-chaperonin GroES (103 aa).

Belongs to the GroES chaperonin family. Heptamer of 7 subunits arranged in a ring. Interacts with the chaperonin GroEL.

It localises to the cytoplasm. Together with the chaperonin GroEL, plays an essential role in assisting protein folding. The GroEL-GroES system forms a nano-cage that allows encapsulation of the non-native substrate proteins and provides a physical environment optimized to promote and accelerate protein folding. GroES binds to the apical surface of the GroEL ring, thereby capping the opening of the GroEL channel. The chain is Co-chaperonin GroES from Nostoc punctiforme (strain ATCC 29133 / PCC 73102).